A 334-amino-acid chain; its full sequence is RNA ligase 2 (334 aa).

The tract at residues 1-234 is adenylyltransferase; sequence MFKKYSSLEN…KCKNSKFSEK (234 aa). AMP contacts are provided by glutamate 34, lysine 35, isoleucine 36, asparagine 40, arginine 55, and glutamate 99. Lysine 35 serves as the catalytic N6-AMP-lysine intermediate. Isoleucine 162, leucine 164, asparagine 166, glutamate 204, and tyrosine 206 together coordinate Mg(2+). Residues lysine 225 and lysine 227 each contribute to the AMP site.

The protein belongs to the RNA ligase 2 family. It depends on Mg(2+) as a cofactor. Mn(2+) serves as cofactor.

The catalysed reaction is ATP + (ribonucleotide)n-3'-hydroxyl + 5'-phospho-(ribonucleotide)m = (ribonucleotide)n+m + AMP + diphosphate.. Repairs 3'-OH/5'-PO4 nicks in duplex RNA or RNA:DNA hybrid in which the broken 3'-OH strand is RNA. The nick ligation reaction entails three nucleotidyl transfer steps. In the first step, the RNA ligase reacts with ATP in the absence of nucleic acid to form a covalent ligase-AMP intermediate and release pyrophosphate. In step 2, the ligase-AMP binds to the nicked duplex nucleic acid and transfers the adenylate to the 5'-PO4 terminus to form an adenylylated nicked intermediate. In step 3, the RNA ligase directs the attack of the nick 3'-OH on the 5'-phosphoanhydride linkage, resulting in a repaired 3' - 5' phosphodiester and release of AMP. The polypeptide is RNA ligase 2 (Y10A) (Enterobacteria phage T4 (Bacteriophage T4)).